The chain runs to 630 residues: tRNA uridine 5-carboxymethylaminomethyl modification enzyme MnmG (630 aa).

FAD is bound at residue 13 to 18; that stretch reads GGGHAG. Residue 273–287 coordinates NAD(+); it reads GPRYCPSIEDKVMRF.

Belongs to the MnmG family. As to quaternary structure, homodimer. Heterotetramer of two MnmE and two MnmG subunits. The cofactor is FAD.

The protein localises to the cytoplasm. Its function is as follows. NAD-binding protein involved in the addition of a carboxymethylaminomethyl (cmnm) group at the wobble position (U34) of certain tRNAs, forming tRNA-cmnm(5)s(2)U34. The polypeptide is tRNA uridine 5-carboxymethylaminomethyl modification enzyme MnmG (Actinobacillus pleuropneumoniae serotype 3 (strain JL03)).